Reading from the N-terminus, the 258-residue chain is UPF0246 protein CKO_03380 (258 aa).

The protein belongs to the UPF0246 family.

The sequence is that of UPF0246 protein CKO_03380 from Citrobacter koseri (strain ATCC BAA-895 / CDC 4225-83 / SGSC4696).